Here is a 217-residue protein sequence, read N- to C-terminus: Peroxiredoxin (217 aa).

Positions 2–159 (PVIGEKFPEV…IVRLVKALQV (158 aa)) constitute a Thioredoxin domain. Catalysis depends on cysteine 46, which acts as the Cysteine sulfenic acid (-SOH) intermediate. Substrate is bound at residue arginine 122. The cysteines at positions 206 and 212 are disulfide-linked.

Belongs to the peroxiredoxin family. Prx6 subfamily. Homodecamer. Pentamer of dimers that assemble into a ring structure.

It is found in the cytoplasm. It carries out the reaction a hydroperoxide + [thioredoxin]-dithiol = an alcohol + [thioredoxin]-disulfide + H2O. Functionally, thiol-specific peroxidase that catalyzes the reduction of hydrogen peroxide and organic hydroperoxides to water and alcohols, respectively. Plays a role in cell protection against oxidative stress by detoxifying peroxides. The polypeptide is Peroxiredoxin (Methanocaldococcus jannaschii (strain ATCC 43067 / DSM 2661 / JAL-1 / JCM 10045 / NBRC 100440) (Methanococcus jannaschii)).